Here is an 868-residue protein sequence, read N- to C-terminus: Ionotropic receptor 93a (868 aa).

The first 28 residues, 1–28, serve as a signal peptide directing secretion; sequence MNPGEMRPSACLLLLAGLQLSILVPTEA. Residues 29-565 are Extracellular-facing; sequence NDFSSFLSAN…ITRKPDEVSR (537 aa). N-linked (GlcNAc...) asparagine glycosylation is found at N38, N205, N294, N305, N432, N475, N499, and N543. The chain crosses the membrane as a helical span at residues 566–586; that stretch reads IYLFTAPFTVETWFCLMGIIL. Topologically, residues 587-642 are cytoplasmic; the sequence is LTAPTLYAINRLAPLKEMRIVGLSTVKSCFWYIFGALLQQGGMYLPTADSGRLVVG. Residues 643 to 663 traverse the membrane as a helical segment; that stretch reads FWWIVVIVLVTTYCGNLVAFL. At 664–832 the chain is on the extracellular side; it reads TFPKFQPGVD…HKVNMDDMQG (169 aa). The N-linked (GlcNAc...) asparagine glycan is linked to N691. The chain crosses the membrane as a helical span at residues 833-853; sequence CFLVLLLGFTLALLIVCGEFW. Topologically, residues 854-868 are cytoplasmic; it reads YRRFRASRKRRQFTN.

This sequence belongs to the glutamate-gated ion channel (TC 1.A.10.1) family. In terms of tissue distribution, in the antenna, detected in sacculus neurons which innervate the first and second chambers (at protein level). Expressed in multiple cells of the larval dorsal organ ganglion, including the dorsal organ cool cells where it is predominately localized to the dendritic bulbs (at protein level).

Its subcellular location is the cell membrane. Integral part of various neural sensory systems in the antenna that provide the neural basis for the response to environmental changes in temperature (thermosensation) and humidity (hygrosensation). Together with Ir21a and Ir25a, mediates the response of the larval dorsal organ cool cells, a trio of cool-responsive neurons, to cooling and is required for cool avoidance behavior. Together with Ir25a and Ir40a, mediates the response of the hydrosensory sacculus neurons to changes in relative humidity, and is required for dry detection and humidiy preference behavior. This chain is Ionotropic receptor 93a, found in Drosophila melanogaster (Fruit fly).